The chain runs to 178 residues: MSRIGRLPITVPAGVEVKVDGSVVSVKGSKGELSHTVASPIEVSLEDGTLTVARPNDERASRSLHGLTRTLIANMIQGVTAGYEKKLEIVGTGYRVQAKGSDLEFALGYSHPVNVSAPNGITFAVETPTKLSVSGISKQQVGEVAANIRKLRKPDPYKGKGIRYAGEVIRRKVGKAGK.

The protein belongs to the universal ribosomal protein uL6 family. As to quaternary structure, part of the 50S ribosomal subunit.

Functionally, this protein binds to the 23S rRNA, and is important in its secondary structure. It is located near the subunit interface in the base of the L7/L12 stalk, and near the tRNA binding site of the peptidyltransferase center. The polypeptide is Large ribosomal subunit protein uL6 (Arthrobacter sp. (strain FB24)).